The chain runs to 241 residues: MAIDTVVLDIEGTVCPITFVKEKLFPYFLEKLPSFLSEISNFTSLQADDKDPIKAILSQLPEQIRTSKDSVLEYFNDLVRRDIKDPILKQLQGFIWKLGYENGDLKAPVYEDSIEFIKTFPSKTENKRIYIYSSGSIKAQILLFGYVDENGKSVDLNEYLSGYFDITTAGFKTQSSSYTKILEDIGKEHGGSVLFLSDNVLEVEAALEAGMESYVVVRPGNAPLTEDDKTKYKIITSLEQL.

Asp9 and Glu11 together coordinate Mg(2+). Residues 133 to 134 and Lys172 contribute to the substrate site; that span reads SS. Asp198 contributes to the Mg(2+) binding site.

The protein belongs to the HAD-like hydrolase superfamily. MasA/MtnC family. Monomer. Requires Mg(2+) as cofactor.

The protein localises to the cytoplasm. The protein resides in the nucleus. The enzyme catalyses 5-methylsulfanyl-2,3-dioxopentyl phosphate + H2O = 1,2-dihydroxy-5-(methylsulfanyl)pent-1-en-3-one + phosphate. It participates in amino-acid biosynthesis; L-methionine biosynthesis via salvage pathway; L-methionine from S-methyl-5-thio-alpha-D-ribose 1-phosphate: step 3/6. Its pathway is amino-acid biosynthesis; L-methionine biosynthesis via salvage pathway; L-methionine from S-methyl-5-thio-alpha-D-ribose 1-phosphate: step 4/6. Its function is as follows. Bifunctional enzyme that catalyzes the enolization of 2,3-diketo-5-methylthiopentyl-1-phosphate (DK-MTP-1-P) into the intermediate 2-hydroxy-3-keto-5-methylthiopentenyl-1-phosphate (HK-MTPenyl-1-P), which is then dephosphorylated to form the acireductone 1,2-dihydroxy-3-keto-5-methylthiopentene (DHK-MTPene). The polypeptide is Enolase-phosphatase E1 (Scheffersomyces stipitis (strain ATCC 58785 / CBS 6054 / NBRC 10063 / NRRL Y-11545) (Yeast)).